Reading from the N-terminus, the 128-residue chain is Aspartate 1-decarboxylase (128 aa).

The active-site Schiff-base intermediate with substrate; via pyruvic acid is Ser25. Ser25 is subject to Pyruvic acid (Ser). Substrate is bound at residue Thr57. Tyr58 functions as the Proton donor in the catalytic mechanism. 73-75 (GSA) is a binding site for substrate.

The protein belongs to the PanD family. In terms of assembly, heterooctamer of four alpha and four beta subunits. Requires pyruvate as cofactor. In terms of processing, is synthesized initially as an inactive proenzyme, which is activated by self-cleavage at a specific serine bond to produce a beta-subunit with a hydroxyl group at its C-terminus and an alpha-subunit with a pyruvoyl group at its N-terminus.

The protein localises to the cytoplasm. It carries out the reaction L-aspartate + H(+) = beta-alanine + CO2. It functions in the pathway cofactor biosynthesis; (R)-pantothenate biosynthesis; beta-alanine from L-aspartate: step 1/1. In terms of biological role, catalyzes the pyruvoyl-dependent decarboxylation of aspartate to produce beta-alanine. The protein is Aspartate 1-decarboxylase of Paraburkholderia phymatum (strain DSM 17167 / CIP 108236 / LMG 21445 / STM815) (Burkholderia phymatum).